A 273-amino-acid polypeptide reads, in one-letter code: 4-hydroxy-tetrahydrodipicolinate reductase (273 aa).

NAD(+)-binding positions include 12–17 (GAGGRM) and Glu38. Arg39 is a binding site for NADP(+). NAD(+)-binding positions include 102–104 (GTT) and 126–129 (AANF). His159 functions as the Proton donor/acceptor in the catalytic mechanism. (S)-2,3,4,5-tetrahydrodipicolinate is bound at residue His160. Lys163 (proton donor) is an active-site residue. 169 to 170 (GT) contributes to the (S)-2,3,4,5-tetrahydrodipicolinate binding site.

Belongs to the DapB family. Homotetramer.

It localises to the cytoplasm. The enzyme catalyses (S)-2,3,4,5-tetrahydrodipicolinate + NAD(+) + H2O = (2S,4S)-4-hydroxy-2,3,4,5-tetrahydrodipicolinate + NADH + H(+). It catalyses the reaction (S)-2,3,4,5-tetrahydrodipicolinate + NADP(+) + H2O = (2S,4S)-4-hydroxy-2,3,4,5-tetrahydrodipicolinate + NADPH + H(+). Its pathway is amino-acid biosynthesis; L-lysine biosynthesis via DAP pathway; (S)-tetrahydrodipicolinate from L-aspartate: step 4/4. Catalyzes the conversion of 4-hydroxy-tetrahydrodipicolinate (HTPA) to tetrahydrodipicolinate. This is 4-hydroxy-tetrahydrodipicolinate reductase from Klebsiella pneumoniae subsp. pneumoniae (strain ATCC 700721 / MGH 78578).